The sequence spans 616 residues: Dihydroxy-acid dehydratase (616 aa).

D81 serves as a coordination point for Mg(2+). [2Fe-2S] cluster is bound at residue C122. Positions 123 and 124 each coordinate Mg(2+). Position 124 is an N6-carboxylysine (K124). Residue C195 coordinates [2Fe-2S] cluster. E491 contributes to the Mg(2+) binding site. The active-site Proton acceptor is S517.

The protein belongs to the IlvD/Edd family. As to quaternary structure, homodimer. [2Fe-2S] cluster is required as a cofactor. Mg(2+) serves as cofactor.

It carries out the reaction (2R)-2,3-dihydroxy-3-methylbutanoate = 3-methyl-2-oxobutanoate + H2O. The catalysed reaction is (2R,3R)-2,3-dihydroxy-3-methylpentanoate = (S)-3-methyl-2-oxopentanoate + H2O. It functions in the pathway amino-acid biosynthesis; L-isoleucine biosynthesis; L-isoleucine from 2-oxobutanoate: step 3/4. Its pathway is amino-acid biosynthesis; L-valine biosynthesis; L-valine from pyruvate: step 3/4. Functionally, functions in the biosynthesis of branched-chain amino acids. Catalyzes the dehydration of (2R,3R)-2,3-dihydroxy-3-methylpentanoate (2,3-dihydroxy-3-methylvalerate) into 2-oxo-3-methylpentanoate (2-oxo-3-methylvalerate) and of (2R)-2,3-dihydroxy-3-methylbutanoate (2,3-dihydroxyisovalerate) into 2-oxo-3-methylbutanoate (2-oxoisovalerate), the penultimate precursor to L-isoleucine and L-valine, respectively. The chain is Dihydroxy-acid dehydratase from Blochmanniella pennsylvanica (strain BPEN).